We begin with the raw amino-acid sequence, 71 residues long: DNA-directed RNA polymerase subunit omega (71 aa).

This sequence belongs to the RNA polymerase subunit omega family. In terms of assembly, the RNAP catalytic core consists of 2 alpha, 1 beta/beta' and 1 omega subunit. When a sigma factor is associated with the core the holoenzyme is formed, which can initiate transcription.

It carries out the reaction RNA(n) + a ribonucleoside 5'-triphosphate = RNA(n+1) + diphosphate. Its function is as follows. Promotes RNA polymerase assembly. Latches the N- and C-terminal regions of the beta' subunit thereby facilitating its interaction with the beta and alpha subunits. The protein is DNA-directed RNA polymerase subunit omega of Wolinella succinogenes (strain ATCC 29543 / DSM 1740 / CCUG 13145 / JCM 31913 / LMG 7466 / NCTC 11488 / FDC 602W) (Vibrio succinogenes).